The chain runs to 148 residues: Deoxyuridine 5'-triphosphate nucleotidohydrolase (148 aa).

Residues 67-69 (RSG), asparagine 80, 84-86 (LID), and methionine 94 each bind substrate.

The protein belongs to the dUTPase family. The cofactor is Mg(2+).

It carries out the reaction dUTP + H2O = dUMP + diphosphate + H(+). It participates in pyrimidine metabolism; dUMP biosynthesis; dUMP from dCTP (dUTP route): step 2/2. Its function is as follows. This enzyme is involved in nucleotide metabolism: it produces dUMP, the immediate precursor of thymidine nucleotides and it decreases the intracellular concentration of dUTP so that uracil cannot be incorporated into DNA. The sequence is that of Deoxyuridine 5'-triphosphate nucleotidohydrolase from Francisella philomiragia subsp. philomiragia (strain ATCC 25017 / CCUG 19701 / FSC 153 / O#319-036).